Consider the following 382-residue polypeptide: Manganese peroxidase H4 (382 aa).

An N-terminal signal peptide occupies residues 1 to 24; the sequence is MAFGSLLAFVALAAITRAAPTAES. 5 disulfides stabilise this stretch: Cys27–Cys39, Cys38–Cys313, Cys57–Cys141, Cys277–Cys344, and Cys366–Cys373. Glu59 and Glu63 together coordinate Mn(2+). His70 (proton acceptor) is an active-site residue. Residues Asp71, Gly86, Asp88, and Ser90 each contribute to the Ca(2+) site. Asn100 and Asn155 each carry an N-linked (GlcNAc...) asparagine glycan. Residue His197 coordinates heme b. Residue Thr198 coordinates Ca(2+). Residue Asp203 participates in Mn(2+) binding. Residues Asp215, Thr217, Thr220, and Asp222 each contribute to the Ca(2+) site. The N-linked (GlcNAc...) asparagine glycan is linked to Asn241.

The protein belongs to the peroxidase family. Ligninase subfamily. Heme b is required as a cofactor. The cofactor is Ca(2+).

The protein resides in the secreted. The catalysed reaction is 2 Mn(2+) + H2O2 + 2 H(+) = 2 Mn(3+) + 2 H2O. Functionally, catalyzes the oxidation of Mn(2+) to Mn(3+). The latter, acting as a diffusible redox mediator, is capable of oxidizing a variety of lignin compounds. The polypeptide is Manganese peroxidase H4 (Phanerodontia chrysosporium (White-rot fungus)).